The chain runs to 436 residues: Gamma-glutamyl phosphate reductase (436 aa).

It belongs to the gamma-glutamyl phosphate reductase family.

Its subcellular location is the cytoplasm. The catalysed reaction is L-glutamate 5-semialdehyde + phosphate + NADP(+) = L-glutamyl 5-phosphate + NADPH + H(+). It participates in amino-acid biosynthesis; L-proline biosynthesis; L-glutamate 5-semialdehyde from L-glutamate: step 2/2. Its function is as follows. Catalyzes the NADPH-dependent reduction of L-glutamate 5-phosphate into L-glutamate 5-semialdehyde and phosphate. The product spontaneously undergoes cyclization to form 1-pyrroline-5-carboxylate. The sequence is that of Gamma-glutamyl phosphate reductase from Prochlorococcus marinus (strain AS9601).